We begin with the raw amino-acid sequence, 235 residues long: Class B acid phosphatase (235 aa).

Positions 1 to 22 are cleaved as a signal peptide; sequence MKNLLKLSAIAILAASAVSTFA. Asp-67 acts as the Nucleophile in catalysis. The Mg(2+) site is built by Asp-67 and Asp-69. Asp-69 (proton donor) is an active-site residue. Substrate-binding positions include 135-136 and Lys-175; that span reads TG. A Mg(2+)-binding site is contributed by Asp-190.

It belongs to the class B bacterial acid phosphatase family. Homotetramer. It depends on Mg(2+) as a cofactor.

It localises to the periplasm. The catalysed reaction is a phosphate monoester + H2O = an alcohol + phosphate. Dephosphorylates several organic phosphate monoesters. Also has a phosphotransferase activity catalyzing the transfer of low-energy phosphate groups from organic phosphate monoesters to free hydroxyl groups of various organic compounds. The sequence is that of Class B acid phosphatase from Haemophilus parainfluenzae (strain T3T1).